The following is a 309-amino-acid chain: tRNA N6-adenosine threonylcarbamoyltransferase (309 aa).

2 residues coordinate Fe cation: His-108 and His-112. Residues 130–134 (LVSGG), Asp-163, Gly-176, Asp-180, and Asn-269 each bind substrate. Asp-293 lines the Fe cation pocket.

This sequence belongs to the KAE1 / TsaD family. Fe(2+) serves as cofactor.

It is found in the cytoplasm. The enzyme catalyses L-threonylcarbamoyladenylate + adenosine(37) in tRNA = N(6)-L-threonylcarbamoyladenosine(37) in tRNA + AMP + H(+). Its function is as follows. Required for the formation of a threonylcarbamoyl group on adenosine at position 37 (t(6)A37) in tRNAs that read codons beginning with adenine. Is involved in the transfer of the threonylcarbamoyl moiety of threonylcarbamoyl-AMP (TC-AMP) to the N6 group of A37, together with TsaE and TsaB. TsaD likely plays a direct catalytic role in this reaction. The chain is tRNA N6-adenosine threonylcarbamoyltransferase from Mycoplasmopsis agalactiae (strain NCTC 10123 / CIP 59.7 / PG2) (Mycoplasma agalactiae).